The sequence spans 484 residues: MERRMKAGYLDQQVPYTFSSKSPGNGSLREALIGPLGKLMDPGSLPPLDSEDLFQDLSHFQETWLAEAQVPDSDEQFVPDFHSENLAFHSPTTRIKKEPQSPRTDPALSCSRKPPLPYHHGEQCLYSSAYDPPRQIAIKSPAPGALGQSPLQPFPRAEQRNFLRSSGTSQPHPGHGYLGEHSSVFQQPLDICHSFTSQGGGREPLPAPYQHQLSEPCPPYPQQSFKQEYHDPLYEQAGQPAVDQGGVNGHRYPGAGVVIKQEQTDFAYDSDVTGCASMYLHTEGFSGPSPGDGAMGYGYEKPLRPFPDDVCVVPEKFEGDIKQEGVGAFREGPPYQRRGALQLWQFLVALLDDPTNAHFIAWTGRGMEFKLIEPEEVARLWGIQKNRPAMNYDKLSRSLRYYYEKGIMQKVAGERYVYKFVCEPEALFSLAFPDNQRPALKAEFDRPVSEEDTVPLSHLDESPAYLPELAGPAQPFGPKGGYSY.

Lysine 6 is covalently cross-linked (Glycyl lysine isopeptide (Lys-Gly) (interchain with G-Cter in SUMO2)). The tract at residues 90–115 (SPTTRIKKEPQSPRTDPALSCSRKPP) is disordered. Residue lysine 96 forms a Glycyl lysine isopeptide (Lys-Gly) (interchain with G-Cter in SUMO) linkage. Serine 101 is modified (phosphoserine). Lysine 139 participates in a covalent cross-link: Glycyl lysine isopeptide (Lys-Gly) (interchain with G-Cter in SUMO2). Phosphoserine occurs at positions 140, 149, and 214. Residues lysine 226 and lysine 260 each participate in a glycyl lysine isopeptide (Lys-Gly) (interchain with G-Cter in SUMO) cross-link. Lysine 322 is covalently cross-linked (Glycyl lysine isopeptide (Lys-Gly) (interchain with G-Cter in SUMO2)). The ETS DNA-binding region spans 341-421 (LQLWQFLVAL…AGERYVYKFV (81 aa)).

It belongs to the ETS family. Sumoylated; enhanced upon ERK/MAP kinase pathway activation, it positively regulates the transcriptional activator capacity. Sumoylation at Lys-96 probably requires phosphorylation at Ser-101. Transiently polysumoylated and desumoylated by SENP1. Sumoylation is a prerequisite to polyubiquitination which in turn increases proteasomal-mediated degradation. Probably polyubiquitinated by RNF4 and deubiquitinated by USP2. Expressed in keratinocytes.

The protein resides in the nucleus. Transcriptional activator. May play a role in keratinocyte differentiation. Its function is as follows. (Microbial infection) Binds to the enhancer of the adenovirus E1A gene and acts as a transcriptional activator; the core-binding sequence is 5'-[AC]GGA[AT]GT-3'. The chain is ETS translocation variant 4 (ETV4) from Homo sapiens (Human).